We begin with the raw amino-acid sequence, 163 residues long: MADSSFDIVSKVDHQEVDNALNQAAKELATRFDFRGTDTKIAWKGDEAVELTSSTEERVKAAVDVFKEKLIRRDISMKAFDAGEPQASGKTYKVTGDIKQGISGDDAKKITKLVRDEGPKGVKTQIQGEEIRVTSKKRDDLQTVIAMLKQADLDVALQFVNYR.

This sequence belongs to the YajQ family.

In terms of biological role, nucleotide-binding protein. In Mycobacterium ulcerans (strain Agy99), this protein is Nucleotide-binding protein MUL_0671.